The primary structure comprises 786 residues: Ribosome biogenesis protein BOP1 homolog (786 aa).

Residues 1 to 11 show a composition bias toward basic residues; that stretch reads MAKKSAIKRKV. Residues 1–161 are disordered; sequence MAKKSAIKRK…NSDTSDEEDI (161 aa). Polar residues predominate over residues 17–26; sequence INEQASVSEQ. Composition is skewed to acidic residues over residues 44-53, 60-72, and 82-114; these read EDTTDDEGID, TSDD…DEEG, and SGED…DDAK. Over residues 122 to 135 the composition is skewed to polar residues; the sequence is KATLSKTTGDSSNI. Residues 141 to 150 show a composition bias toward basic and acidic residues; that stretch reads PRRDPSKPEY. The span at 151-160 shows a compositional bias: acidic residues; that stretch reads ENSDTSDEED. WD repeat units follow at residues 447–488, 490–528, 572–614, 617–655, 658–697, 701–740, and 756–786; these read GHTD…RTIE, NDVV…KLLV, THFK…SQIP, KSKG…LIKK, TNSK…KPYQ, LHRN…DLLQ, and RDEF…RLYT.

The protein belongs to the WD repeat BOP1/ERB1 family.

It is found in the nucleus. The protein resides in the nucleolus. It localises to the nucleoplasm. Required for maturation of ribosomal RNAs and formation of the large ribosomal subunit. The protein is Ribosome biogenesis protein BOP1 homolog of Drosophila grimshawi (Hawaiian fruit fly).